The following is a 65-amino-acid chain: MSNGIKRYISVMQLTLINKKHMHYAPHIAMLVTLLLIGQQLAKLSWRMILPAYSPAIEMNDATEI.

The polypeptide is Protein MalX (malX) (Klebsiella pneumoniae).